The chain runs to 731 residues: Actin filament-associated protein 1 (731 aa).

Residue Met1 is modified to N-acetylmethionine. A disordered region spans residues 46-90 (VKDHAQKAETNNLPAPPQMPLPEIPQPWLPPDSGPPPLPTSSLPE). A compositionally biased stretch (pro residues) spans 59 to 84 (PAPPQMPLPEIPQPWLPPDSGPPPLP). Positions 70 to 73 (PQPW) match the SH3-binding motif. An SH2-binding 1 motif is present at residues 93–96 (YEEA). Residues 118 to 138 (GSSYESYDEEEEDGKGKKTQH) are disordered. One can recognise a PH 1 domain in the interval 152–248 (DAKICAFLLR…WLKVIKEAYS (97 aa)). Residues 252 to 318 (GPVDPECSPP…SKSEAKGTVS (67 aa)) are disordered. The segment covering 271 to 284 (AELEKKLSSERPSS) has biased composition (basic and acidic residues). A phosphoserine mark is found at Ser283 and Ser284. The region spanning 348–442 (DVPTCGYLNV…WIGILLAETG (95 aa)) is the PH 2 domain. The short motif at 452 to 457 (YDYIDV) is the SH2-binding 2 element. The disordered stretch occupies residues 511-550 (SLKNKKPPASSNGLPVKGRAPSSQQKKVESAGGVKRTASN). Ser549 is subject to Phosphoserine. Positions 558–649 (KNRVEADAKR…VKESLKKALA (92 aa)) form a coiled coil. The interaction with F-actin stretch occupies residues 595–638 (DLRAAIEVNAGRKTQVALEDKLKRLEEECKQREAERVSLELELT). The segment at 657–731 (AIEPKSGTSS…AREWELKNGT (75 aa)) is disordered. Residues Ser665, Ser666, and Ser669 each carry the phosphoserine modification. Thr676 carries the phosphothreonine modification. Over residues 678–687 (ENSPISSCDT) the composition is skewed to polar residues. A phosphoserine mark is found at Ser680 and Ser688. Positions 721–731 (KAREWELKNGT) are enriched in basic and acidic residues.

Monomer and homomultimer. Interacts via its C-terminus with F-actin; probably involving AFAP1 multimers. Interacts with activated SRC SH3-SH2 domains. Interacts via its PH 1 domain with PRKCA, PRKCB and PRKCI. Phosphorylated on tyrosine residues. Widely expressed with highest levels in brain.

The protein resides in the cytoplasm. The protein localises to the cytoskeleton. It localises to the stress fiber. In terms of biological role, can cross-link actin filaments into both network and bundle structures. May modulate changes in actin filament integrity and induce lamellipodia formation. May function as an adapter molecule that links other proteins, such as SRC and PKC to the actin cytoskeleton. The polypeptide is Actin filament-associated protein 1 (Afap1) (Rattus norvegicus (Rat)).